Reading from the N-terminus, the 298-residue chain is GTPase Era (298 aa).

Residues 3–170 enclose the Era-type G domain; the sequence is KSGFVAILGR…VQLLKDNLEE (168 aa). Residues 11 to 18 form a G1 region; it reads GRPNVGKS. Residue 11 to 18 participates in GTP binding; the sequence is GRPNVGKS. The G2 stretch occupies residues 37 to 41; sequence QTTRN. Residues 58-61 are G3; that stretch reads DTPG. GTP is bound by residues 58-62 and 120-123; these read DTPGI and NKID. A G4 region spans residues 120–123; it reads NKID. The G5 stretch occupies residues 149-151; it reads ISA. Residues 201 to 279 form the KH type-2 domain; that stretch reads TQQEVPHSVA…YLETWVKVKK (79 aa).

Belongs to the TRAFAC class TrmE-Era-EngA-EngB-Septin-like GTPase superfamily. Era GTPase family. In terms of assembly, monomer.

The protein resides in the cytoplasm. Its subcellular location is the cell membrane. Functionally, an essential GTPase that binds both GDP and GTP, with rapid nucleotide exchange. Plays a role in 16S rRNA processing and 30S ribosomal subunit biogenesis and possibly also in cell cycle regulation and energy metabolism. This is GTPase Era from Streptococcus equi subsp. zooepidemicus (strain MGCS10565).